We begin with the raw amino-acid sequence, 490 residues long: Fumitremorgin C monooxygenase (490 aa).

Residues leucine 12–glycine 32 form a helical membrane-spanning segment. Residue cysteine 442 coordinates heme.

It belongs to the cytochrome P450 family. Requires heme as cofactor.

The protein localises to the membrane. It carries out the reaction fumitremorgin C + 2 reduced [NADPH--hemoprotein reductase] + 2 O2 = 12alpha,13alpha-dihydroxyfumitremorgin C + 2 oxidized [NADPH--hemoprotein reductase] + 2 H2O + 2 H(+). It participates in mycotoxin biosynthesis. Functionally, cytochrome P450 monooxygenase; part of the gene cluster that mediates the biosynthesis of fumitremorgins, indole alkaloids that carry not only intriguing chemical structures, but also interesting biological and pharmacological activities. The biosynthesis of fumitremorgin-type alkaloids begins by condensation of the two amino acids L-tryptophan and L-proline to brevianamide F, catalyzed by the non-ribosomal peptide synthetase ftmA. Brevianamide F is then prenylated by the prenyltransferase ftmPT1/ftmB in the presence of dimethylallyl diphosphate, resulting in the formation of tryprostatin B. The three cytochrome P450 monooxygenases, ftmP450-1/ftmC, ftmP450-2/ftmE and ftmP450-3/FtmG, are responsible for the conversion of tryprostatin B to 6-hydroxytryprostatin B, tryprostatin A to fumitremorgin C and fumitremorgin C to 12,13-dihydroxyfumitremorgin C, respectively. The putative methyltransferase ftmMT/ftmD is expected for the conversion of 6-hydroxytryprostatin B to tryprostatin A. FtmPT2/FtmH catalyzes the prenylation of 12,13-dihydroxyfumitre-morgin C in the presence of dimethylallyl diphosphate, resulting in the formation of fumitremorgin B. Fumitremorgin B is further converted to verruculogen by ftmOx1/ftmF via the insertion of an endoperoxide bond between the two prenyl moieties. In some fungal species, verruculogen is further converted to fumitremorgin A, but the enzymes involved in this step have not been identified yet. The chain is Fumitremorgin C monooxygenase from Aspergillus fumigatus (strain ATCC MYA-4609 / CBS 101355 / FGSC A1100 / Af293) (Neosartorya fumigata).